The following is a 512-amino-acid chain: Acid-sensing ion channel 2 (512 aa).

The Cytoplasmic portion of the chain corresponds to 1-42; the sequence is MDLKESPSEGSLQPSSIQIFANTSTLHGIRHIFVYGPLTIRR. A phosphoserine mark is found at Ser-8 and Ser-11. The chain crosses the membrane as a helical span at residues 43 to 64; that stretch reads VLWAVAFVGSLGLLLVESSERV. Topologically, residues 65 to 424 are extracellular; that stretch reads SYYFSYQHVT…ETIEQKKAYE (360 aa). Cystine bridges form between Cys-92-Cys-193, Cys-289-Cys-364, Cys-307-Cys-360, Cys-311-Cys-358, Cys-320-Cys-342, and Cys-322-Cys-334. Asn-365 and Asn-392 each carry an N-linked (GlcNAc...) asparagine glycan. The helical transmembrane segment at 425–439 threads the bilayer; it reads VAALLGDIGGQMGLF. Residues 440–512 are Cytoplasmic-facing; that stretch reads IGASILTILE…TLGTLEEIAC (73 aa). A GAS motif; ion selectivity filter motif is present at residues 441–443; sequence GAS.

Belongs to the amiloride-sensitive sodium channel (TC 1.A.6) family. ASIC2 subfamily. As to quaternary structure, can form homotrimers. Heterotrimer; forms functional heterotrimers producing channel with different properties. Forms heterotrimers with ASIC1; while ASIC1 determines current amplitude, ASIC2 influences the properties of the current. Forms heterotrimers with ASIC3; resulting in channels with distinct properties. Interacts with STOM; STOM regulates the gating of ASIC2-containing channels. Interacts with PICK1; promotes ASIC3 phosphorylation by PKC and activation of ASIC2/ASIC3 heterotrimers. As to expression, expressed in brain, cerebellum, trigeminal sensory ganglia and also detected in testis.

It is found in the cell membrane. It carries out the reaction Na(+)(in) = Na(+)(out). The catalysed reaction is K(+)(in) = K(+)(out). It catalyses the reaction Li(+)(in) = Li(+)(out). Its activity is regulated as follows. Inhibited by the diuretic drug amiloride. Inhibited by gadolinium ions, the heterotrimer with ASIC3 being more sensitive. Heterotrimer composed of ASIC1 and ASIC2 are inhibited by the snake venom mambalgin-1. Forms pH-gated trimeric sodium channels that act as postsynaptic excitatory sensors in the nervous system. Upon extracellular acidification, these channels generate rapid, transient inward currents that fully desensitize. Highly selective for sodium, they are permeable to other cations. By forming heterotrimeric channels with ASIC1, could contribute to synaptic plasticity, learning, and memory. Additionally, as acid sensors at nerve terminals, plays a role in mechanosensation and phototransduction. The polypeptide is Acid-sensing ion channel 2 (Homo sapiens (Human)).